A 52-amino-acid polypeptide reads, in one-letter code: Large ribosomal subunit protein bL33 (52 aa).

It belongs to the bacterial ribosomal protein bL33 family.

The polypeptide is Large ribosomal subunit protein bL33 (Helicobacter acinonychis (strain Sheeba)).